Reading from the N-terminus, the 199-residue chain is Probable cobalt-precorrin-6B C(15)-methyltransferase (decarboxylating) (199 aa).

Residues threonine 24, 48 to 52, aspartate 72, and alanine 101 each bind S-adenosyl-L-methionine; that span reads GCGTG.

Belongs to the methyltransferase superfamily. Archaeal-type CbiT family.

The enzyme catalyses Co-precorrin-6B + S-adenosyl-L-methionine = Co-precorrin-7 + S-adenosyl-L-homocysteine + CO2. Its pathway is cofactor biosynthesis; adenosylcobalamin biosynthesis; cob(II)yrinate a,c-diamide from sirohydrochlorin (anaerobic route): step 8/10. In terms of biological role, catalyzes the methylation of C-15 in cobalt-precorrin-6B followed by the decarboxylation of C-12 to form cobalt-precorrin-7. This is Probable cobalt-precorrin-6B C(15)-methyltransferase (decarboxylating) from Saccharolobus islandicus (strain Y.N.15.51 / Yellowstone #2) (Sulfolobus islandicus).